Consider the following 89-residue polypeptide: Small ribosomal subunit protein uS15 (89 aa).

This sequence belongs to the universal ribosomal protein uS15 family. Part of the 30S ribosomal subunit. Forms a bridge to the 50S subunit in the 70S ribosome, contacting the 23S rRNA.

In terms of biological role, one of the primary rRNA binding proteins, it binds directly to 16S rRNA where it helps nucleate assembly of the platform of the 30S subunit by binding and bridging several RNA helices of the 16S rRNA. Its function is as follows. Forms an intersubunit bridge (bridge B4) with the 23S rRNA of the 50S subunit in the ribosome. The sequence is that of Small ribosomal subunit protein uS15 from Cupriavidus necator (strain ATCC 17699 / DSM 428 / KCTC 22496 / NCIMB 10442 / H16 / Stanier 337) (Ralstonia eutropha).